Consider the following 608-residue polypeptide: DNA ligase (608 aa).

Glu-266 lines the ATP pocket. The N6-AMP-lysine intermediate role is filled by Lys-268. Positions 273, 288, 318, 358, 435, and 441 each coordinate ATP.

The protein belongs to the ATP-dependent DNA ligase family. Mg(2+) serves as cofactor. The cofactor is Mn(2+).

It catalyses the reaction ATP + (deoxyribonucleotide)n-3'-hydroxyl + 5'-phospho-(deoxyribonucleotide)m = (deoxyribonucleotide)n+m + AMP + diphosphate.. It carries out the reaction ADP + (deoxyribonucleotide)n-3'-hydroxyl + 5'-phospho-(deoxyribonucleotide)m = (deoxyribonucleotide)n+m + AMP + phosphate.. The enzyme catalyses GTP + (deoxyribonucleotide)n-3'-hydroxyl + 5'-phospho-(deoxyribonucleotide)m = (deoxyribonucleotide)n+m + GMP + diphosphate.. DNA ligase that seals nicks in double-stranded DNA during DNA replication, DNA recombination and DNA repair. Can use ATP, ADP and GTP, but not CTP, TTP or NAD(+). The chain is DNA ligase from Hyperthermus butylicus (strain DSM 5456 / JCM 9403 / PLM1-5).